Here is a 1048-residue protein sequence, read N- to C-terminus: MIVADRLNTTTSMVWFPDYENGVGDNDAPRSGTHRAIDMYRYVRDLVSTTNQDGPRTLSEAVEPIRSWVDRDREVNLKFVEMCIIDAYTTDRRQVDDDIDAQTVVILDAILTQDGTGLDSNGAQYYRDVVRTFHDRHIEHAKAIAENKRLVPLYVAMYSNWSNTSAPTRATMDIEAIRGRYTVSVPESMERPMVILFNDLTISEDLVVFATHGELIKYDTRYPPSSDAALAAMSSRRARKGGERDKRISLYMVRRGIYSPGMNYDIAHVHQTPGVGYVITVISNNAPTVDVPRSLVTALGMGGDDDQVVVSDVGGGVTYTASFVLNDITFVTEYLQHYTLLKCTDKATCIFVDETHLMKYARDWRRYTIASPRFIYEYNNFTVKFSATVESTRRDVARVSPYCRIRIYDAPNTQIMYGMANDITAHMIEYKSRERSIASLYAENLHNDQLLRINVRIMRDSKRVKREPGYLARQHRQVRRKLQAQKTGTNADVRSLIGVNNYARQCARLPTAVFDVDDVPEAKEHITYQLPNDRGTLYVYCDHDDAPYPGVVTNRLAGNKTEYPTVPCCYRLRRNANGDPDEGRTQSFYNTQRILNTQAFGKCPANLESVLMCQRYMSRDEVDAAGMETYFPKQSVVGDATAVRGGVNAGPNAAIEAVMRAVHAIKGRDSDPRRLVITTDRLADERSEMVSLLTCASQELFDMSATERNAWLNDTVSYFDPLRLVKLLQFHFDVNVYVYVRGARVKPVKSVRTTENGGVMLRFFEEYEQAWTDNDDVLVVPHHYAGADYHDLKVHESSVVIYVHSGTEISNLTYPHVEYIIFKRHRLVVPMIGKIYQRLLPKSMRNVYSFVYFDVVEDEDERDSLTVDEANALRILFYLSSGKSVSTEWSGKVSTTLNAPTTQTIDGIGRMVGVGGRALESMYSTEPLPSLAVDNHDHSMYYFDDNVKRKRLMNPEHSAKCQYAWYLNKLARVLLHLTAYTILKKGTLMSDLFLVDDVRFNRLHDSINTLFETGVVDMDSYGNLLIAEEERVLAIPSTRHVAWCTMHR.

The protein belongs to the ascovirus HvAV ORF146 family.

The protein resides in the virion. In Spodoptera frugiperda ascovirus 1a (SfAV-1a), this protein is Putative structural protein ORF84.